Consider the following 613-residue polypeptide: Probable inactive purple acid phosphatase 1 (613 aa).

The first 24 residues, 1–24 (MRESLVAILVTVISVLGAIHQVKS), serve as a signal peptide directing secretion. N-linked (GlcNAc...) asparagine glycans are attached at residues Asn-89 and Asn-116. Residue Asp-295 participates in Fe cation binding. Residue Asn-316 is glycosylated (N-linked (GlcNAc...) asparagine). The Fe cation site is built by Asp-336 and Tyr-339. Asp-336 is a Zn(2+) binding site. Zn(2+) contacts are provided by Asn-369, His-458, and His-500. Residue Asn-369 participates in substrate binding. Residue 500–502 (HAH) participates in substrate binding. His-502 contributes to the Fe cation binding site. N-linked (GlcNAc...) asparagine glycosylation is found at Asn-528 and Asn-551.

It belongs to the metallophosphoesterase superfamily. Purple acid phosphatase family. Homodimer. The cofactor is Fe cation. Zn(2+) serves as cofactor. As to expression, expressed in roots, stems, leaves, flowers and siliques.

The protein resides in the secreted. The sequence is that of Probable inactive purple acid phosphatase 1 (PAP1) from Arabidopsis thaliana (Mouse-ear cress).